Reading from the N-terminus, the 555-residue chain is CCR4-NOT transcription complex subunit 6-like (555 aa).

The required for interaction with CNOT1, CNOT3 and CNOT7 stretch occupies residues M1–R152. LRR repeat units lie at residues H57–L78, N80–M101, S103–F125, and Q126–P148. The nuclease domain stretch occupies residues M158 to R555. E240 is a Mg(2+) binding site. 4 residues coordinate substrate: E240, E276, H360, and P365. Residue D410 coordinates Mg(2+). D410 serves as the catalytic Proton donor/acceptor. Substrate-binding residues include N412, N479, and F484.

This sequence belongs to the CCR4/nocturin family. In terms of assembly, component of the CCR4-NOT complex; distinct complexes seem to exist that differ in the participation of probably mutually exclusive catalytic subunits; the complex contains two deadenylase subunits, CNOT6 or CNOT6L, and CNOT7 or CNOT8. Interacts with CNOT1, CNOT3, CNOT7, CNOT8 and CNOT9. Interacts with TOB1. Interacts with NANOS2. Interacts with ZFP36. Interacts with ZFP36L2. Interacts with RBM46. It depends on Mg(2+) as a cofactor. In terms of tissue distribution, highly expressed in placenta, skeletal muscle, pancreas, testis and leukocytes. Weakly expressed in heart, spleen and thymus.

Its subcellular location is the cytoplasm. It is found in the nucleus. It carries out the reaction Exonucleolytic cleavage of poly(A) to 5'-AMP.. Inhibited by free AMP, and with lesser efficiency also by CMP, GMP, UMP, ATP and neomycin. Has 3'-5' poly(A) exoribonuclease activity for synthetic poly(A) RNA substrate. Catalytic component of the CCR4-NOT complex which is one of the major cellular mRNA deadenylases and is linked to various cellular processes including bulk mRNA degradation, miRNA-mediated repression, translational repression during translational initiation and general transcription regulation. Additional complex functions may be a consequence of its influence on mRNA expression. May be involved in the deadenylation-dependent degradation of mRNAs through the 3'-UTR AU-rich element-mediated mechanism. Involved in deadenylation-dependent degradation of CDKN1B mRNA. Its mRNA deadenylase activity can be inhibited by TOB1. Mediates cell proliferation and cell survival and prevents cellular senescence. In Homo sapiens (Human), this protein is CCR4-NOT transcription complex subunit 6-like (CNOT6L).